The primary structure comprises 1002 residues: MSNPPQGSSLASPIQAAAVTGDKTTLLRLIASSPQVIDQEDQLGRTPLMYSVLGDRRSCAEALLKHGAKVNRPDRSGRTALHLAAQTGNHRLLKLLLSRKADCTHRDLCDITALHLSTRHQDTQCLVLLLKYTPPGQVDAQDQRKQTALHWSAYYNRPQHVRLLVRHGSNIGIPDTEGKIPLHWAAGHKDPEAALTVRCLFEAAPTESLLNWQDYEGRTPLHLAVGDGNQEVVRLLTSYRGCNVAPYDNLFRTPLHWAALLGHTPIAHLLLERNNSPNIPSDSQGATPLHYAAQGNCPDTVRVLLSHPSVRDEADLEGRTALMWAAGKGSDEVVRTMLELNPKLEVNRTDKYGGTALHAASLSGQITTVRILLENRAQADAVDVMKHTPLFRACEMGHREVIATLIKGGAKVHLVDKDGRSPLHWAALGGNANVCQILIENNINPDAQDYEGRTPLQCAAYGGYIGCMEVLMENKADPNIQDKNGRTALHWSCNNGYLDAVKLLLGYNAFPNQMENTEERYTPLDYALLGGHQEVIQFMLEHGALSIAAIQDIAAFKIQAVYKGHKVRRAFQERKNLLMKHEQLRKGAAAKKREGENRQKVKVGQTKGKQKDADSMERQNKSNEQIIKNEVVHEWQGEASGNAEDRKGKHREENLETNHLQHSKHMAKNQRITAQIQSSPSEHEHTNSIQIRTSPSGTSNTQSSPLGNEIPKNMYWDDNPSQKHTQTRRTSRHQMESPDVVVHRIEDLIQKESRRKSHREERKGSHRQRQSSDYRLHTSEKEASDSAIHREEEGKKKETKKGRRTVAVTPKIEACCKGGCGKLSQSEKVSLGIGIQGRVDCITSPEPCETPSRVCRERKTISAKTGQRPLTETHKPPGKACRSSSALKSSLPSHIKQTAIDSKCLDSTLSYIGFGEAIKPLFPMGILREGSFFSKWQNIDIELIPVQARLQLVEREKARKQLFQRKNHAATVIQKAWRTYWVRKSSCKTRHSRSQNNPPAMV.

16 ANK repeats span residues 9–39 (SLAS…VIDQ), 43–72 (LGRT…KVNR), 76–105 (SGRT…DCTH), 109–140 (CDIT…QVDA), 144–173 (RKQT…NIGI), 177–209 (EGKI…TESL), 216–246 (EGRT…NVAP), 250–279 (LFRT…SPNI), 284–313 (QGAT…VRDE), 317–346 (EGRT…KLEV), 352–381 (YGGT…QADA), 385–414 (MKHT…KVHL), 418–447 (DGRS…NPDA), 451–480 (EGRT…DPNI), 484–513 (NGRT…FPNQ), and 519–549 (ERYT…SIAA). The short motif at 486–494 (RTALHWSCN) is the D-box 1 element. The region spanning 551–580 (QDIAAFKIQAVYKGHKVRRAFQERKNLLMK) is the IQ 1 domain. 3 stretches are compositionally biased toward basic and acidic residues: residues 586-599 (KGAA…ENRQ), 609-621 (KQKD…RQNK), and 643-656 (AEDR…ENLE). 2 disordered regions span residues 586–804 (KGAA…KGRR) and 862–886 (SAKT…SSSA). Composition is skewed to polar residues over residues 670–680 (QRITAQIQSSP) and 687–706 (NSIQ…SSPL). 2 stretches are compositionally biased toward basic and acidic residues: residues 733–763 (HQME…EERK) and 770–796 (QSSD…EGKK). A D-box 2 motif is present at residues 959–967 (RKQLFQRKN). The 30-residue stretch at 966–995 (KNHAATVIQKAWRTYWVRKSSCKTRHSRSQ) folds into the IQ 2 domain.

As to quaternary structure, interacts with apc2. Binds calmodulin.

The protein resides in the cytoplasm. It localises to the cytoskeleton. In terms of biological role, required for normal renal development and establishment of left-right axis. Probably acts as a molecular switch between different Wnt signaling pathways. Inhibits the canonical Wnt pathway by targeting cytoplasmic disheveled for degradation by the ubiquitin-proteasome. This suggests that it is required in renal development to oppose the repression of terminal differentiation of tubular epithelial cells by Wnt signaling. Plays a central role in convergent extension movements in gastrulating embryos, a processus regulated by Wnt signaling. This chain is Inversin-B (invs-b), found in Xenopus laevis (African clawed frog).